The chain runs to 613 residues: MDLFNYFRRETSEVNIGAVPLGGPNPIRIQSMTNTSTMDTEACVEQAKRIVDAGGEYVRLTTQGVKEAENLMNINIGLRSQGYMVPLVADVHFNPKVADVAAQYAEKVRINPGNYVDAARTFKKLEYTDEEYAQEIQKIHDRFVPFLNICKENHTAIRIGVNHGSLSDRIMSRYGDTPEGMVESCMEFLRICVAEHFTDVVISIKASNTVVMVKTVRLLVAVMEQEGMSFPLHLGVTEAGDGEDGRIKSALGIGALLCDGLGDTIRVSLSEAPEAEIPVARKLVDYVLLRQDHPYIPGMEAPEFNYLSPSRRKTRAVRNIGGEHLPVVIADRMDGKTEVNPQFTPDYIYAGRTLPEQREEGVEYILDADVWEGEAGTWPAFNHAQLPLMGECSAELKFLFMPYMAQTDEVIACLKVHPEVVVISQSNHPNRLGEHRALVHQLMTEGLENPVVFFQHYAEDEAEDLQIKSAVDMGALIFDGLCDGIFLFNQGSLSHAVVDATAFGILQAGRTRTSKTEYISCPGCGRTLYDLEKTIARIKAATSHLKGLKIGIMGCIVNGPGEMADADYGYVGAGRGKISLYKGKVCVEKNIPEEEAVERLLEFIRNDRKELEL.

4 residues coordinate [4Fe-4S] cluster: Cys-521, Cys-524, Cys-555, and Glu-562.

Belongs to the IspG family. [4Fe-4S] cluster serves as cofactor.

The enzyme catalyses (2E)-4-hydroxy-3-methylbut-2-enyl diphosphate + oxidized [flavodoxin] + H2O + 2 H(+) = 2-C-methyl-D-erythritol 2,4-cyclic diphosphate + reduced [flavodoxin]. Its pathway is isoprenoid biosynthesis; isopentenyl diphosphate biosynthesis via DXP pathway; isopentenyl diphosphate from 1-deoxy-D-xylulose 5-phosphate: step 5/6. In terms of biological role, converts 2C-methyl-D-erythritol 2,4-cyclodiphosphate (ME-2,4cPP) into 1-hydroxy-2-methyl-2-(E)-butenyl 4-diphosphate. In Bacteroides thetaiotaomicron (strain ATCC 29148 / DSM 2079 / JCM 5827 / CCUG 10774 / NCTC 10582 / VPI-5482 / E50), this protein is 4-hydroxy-3-methylbut-2-en-1-yl diphosphate synthase (flavodoxin).